We begin with the raw amino-acid sequence, 292 residues long: NAD kinase (292 aa).

Aspartate 64 functions as the Proton acceptor in the catalytic mechanism. NAD(+) is bound by residues 64 to 65 (DG), 138 to 139 (ND), arginine 149, arginine 166, aspartate 168, 179 to 184 (TGYAVS), and glutamine 238.

The protein belongs to the NAD kinase family. A divalent metal cation serves as cofactor.

Its subcellular location is the cytoplasm. The enzyme catalyses NAD(+) + ATP = ADP + NADP(+) + H(+). Its function is as follows. Involved in the regulation of the intracellular balance of NAD and NADP, and is a key enzyme in the biosynthesis of NADP. Catalyzes specifically the phosphorylation on 2'-hydroxyl of the adenosine moiety of NAD to yield NADP. This chain is NAD kinase, found in Oleidesulfovibrio alaskensis (strain ATCC BAA-1058 / DSM 17464 / G20) (Desulfovibrio alaskensis).